We begin with the raw amino-acid sequence, 488 residues long: Ribulose bisphosphate carboxylase large chain (488 aa).

Substrate contacts are provided by N127 and T177. K179 acts as the Proton acceptor in catalysis. Position 181 (K181) interacts with substrate. 3 residues coordinate Mg(2+): K205, D207, and E208. N6-carboxylysine is present on K205. Catalysis depends on H297, which acts as the Proton acceptor. Substrate is bound by residues R298, H330, and S382.

This sequence belongs to the RuBisCO large chain family. Type I subfamily. In terms of assembly, heterohexadecamer of 8 large chains and 8 small chains. Requires Mg(2+) as cofactor.

The protein localises to the plastid. It localises to the chloroplast. It catalyses the reaction 2 (2R)-3-phosphoglycerate + 2 H(+) = D-ribulose 1,5-bisphosphate + CO2 + H2O. The catalysed reaction is D-ribulose 1,5-bisphosphate + O2 = 2-phosphoglycolate + (2R)-3-phosphoglycerate + 2 H(+). RuBisCO catalyzes two reactions: the carboxylation of D-ribulose 1,5-bisphosphate, the primary event in carbon dioxide fixation, as well as the oxidative fragmentation of the pentose substrate in the photorespiration process. Both reactions occur simultaneously and in competition at the same active site. In Gracilaria tenuistipitata var. liui (Red alga), this protein is Ribulose bisphosphate carboxylase large chain.